Reading from the N-terminus, the 361-residue chain is Geranylgeranyl pyrophosphate synthase 3 (361 aa).

The segment at 44 to 63 (DSNGSKELAPNGAQSRVQKP) is disordered. 3 residues coordinate isopentenyl diphosphate: lysine 81, arginine 84, and histidine 113. The Mg(2+) site is built by aspartate 120 and aspartate 124. Position 129 (arginine 129) interacts with dimethylallyl diphosphate. Arginine 130 lines the isopentenyl diphosphate pocket. 3 residues coordinate dimethylallyl diphosphate: lysine 207, threonine 208, and glutamine 244. Aspartate 247 serves as a coordination point for Mg(2+). Dimethylallyl diphosphate-binding residues include asparagine 251, lysine 261, and lysine 271.

This sequence belongs to the FPP/GGPP synthase family. It depends on Mg(2+) as a cofactor.

It carries out the reaction isopentenyl diphosphate + dimethylallyl diphosphate = (2E)-geranyl diphosphate + diphosphate. The catalysed reaction is isopentenyl diphosphate + (2E)-geranyl diphosphate = (2E,6E)-farnesyl diphosphate + diphosphate. It catalyses the reaction isopentenyl diphosphate + (2E,6E)-farnesyl diphosphate = (2E,6E,10E)-geranylgeranyl diphosphate + diphosphate. In terms of biological role, geranylgeranyl pyrophosphate synthase; part of the gene cluster 25 that mediates the biosynthesis of an isoprenoid secondary metabolite. This chain is Geranylgeranyl pyrophosphate synthase 3 (GGS3), found in Zymoseptoria tritici (strain CBS 115943 / IPO323) (Speckled leaf blotch fungus).